The sequence spans 353 residues: ATP-dependent kinase YFH7 (353 aa).

G31 to T39 lines the ATP pocket.

This sequence belongs to the YFH7 family.

Its function is as follows. ATP-dependent kinase that could be involved in endoplasmic reticulum membrane assembly. The sequence is that of ATP-dependent kinase YFH7 (YFH7) from Kluyveromyces lactis (strain ATCC 8585 / CBS 2359 / DSM 70799 / NBRC 1267 / NRRL Y-1140 / WM37) (Yeast).